Here is a 318-residue protein sequence, read N- to C-terminus: NADH-ubiquinone oxidoreductase chain 1 (318 aa).

8 helical membrane-spanning segments follow: residues 1 to 21 (MLPITNSLTYIIPILIAVAFL), 71 to 91 (LLILSPILALTTAMLIWTPIP), 101 to 121 (LGLLSILAISSMAVNSTLWAG), 145 to 165 (VTLGIILLSILILTGGFTMQL), 172 to 192 (HIWLLTTSWPLTMMWFISTLA), 224 to 244 (FFLAEYTNIISMNLLTCIMFI), 253 to 273 (ELFLINLVTKTLLLSLTFLWI), and 294 to 314 (LPLTMALCLLQASLLVSISGI).

The protein belongs to the complex I subunit 1 family.

The protein resides in the mitochondrion inner membrane. The enzyme catalyses a ubiquinone + NADH + 5 H(+)(in) = a ubiquinol + NAD(+) + 4 H(+)(out). Functionally, core subunit of the mitochondrial membrane respiratory chain NADH dehydrogenase (Complex I) that is believed to belong to the minimal assembly required for catalysis. Complex I functions in the transfer of electrons from NADH to the respiratory chain. The immediate electron acceptor for the enzyme is believed to be ubiquinone. The polypeptide is NADH-ubiquinone oxidoreductase chain 1 (MT-ND1) (Varanus rudicollis (Rough-necked monitor lizard)).